The primary structure comprises 240 residues: tRNA (guanine-N(1)-)-methyltransferase (240 aa).

S-adenosyl-L-methionine contacts are provided by residues Gly-108 and 127-132 (LGDYIL).

It belongs to the RNA methyltransferase TrmD family. In terms of assembly, homodimer.

Its subcellular location is the cytoplasm. It catalyses the reaction guanosine(37) in tRNA + S-adenosyl-L-methionine = N(1)-methylguanosine(37) in tRNA + S-adenosyl-L-homocysteine + H(+). Functionally, specifically methylates guanosine-37 in various tRNAs. This is tRNA (guanine-N(1)-)-methyltransferase from Streptococcus sanguinis (strain SK36).